Here is a 413-residue protein sequence, read N- to C-terminus: Aspartate aminotransferase, cytoplasmic (413 aa).

The L-aspartate site is built by Gly39 and Trp141. Residue Ser149 is modified to Phosphoserine. An L-aspartate-binding site is contributed by Asn195. Lys259 is modified (N6-(pyridoxal phosphate)lysine). An L-aspartate-binding site is contributed by Arg387.

Belongs to the class-I pyridoxal-phosphate-dependent aminotransferase family. As to quaternary structure, homodimer. Pyridoxal 5'-phosphate serves as cofactor.

Its subcellular location is the cytoplasm. The enzyme catalyses L-aspartate + 2-oxoglutarate = oxaloacetate + L-glutamate. It catalyses the reaction L-cysteine + 2-oxoglutarate = 2-oxo-3-sulfanylpropanoate + L-glutamate. The catalysed reaction is (2S)-2-aminobutanoate + 2-oxoglutarate = 2-oxobutanoate + L-glutamate. It carries out the reaction 3-sulfino-L-alanine + 2-oxoglutarate = 3-sulfinopyruvate + L-glutamate. Functionally, biosynthesis of L-glutamate from L-aspartate or L-cysteine. Important regulator of levels of glutamate, the major excitatory neurotransmitter of the vertebrate central nervous system. Acts as a scavenger of glutamate in brain neuroprotection. The aspartate aminotransferase activity is involved in hepatic glucose synthesis during development and in adipocyte glyceroneogenesis. Using L-cysteine as substrate, regulates levels of mercaptopyruvate, an important source of hydrogen sulfide. Mercaptopyruvate is converted into H(2)S via the action of 3-mercaptopyruvate sulfurtransferase (3MST). Hydrogen sulfide is an important synaptic modulator and neuroprotectant in the brain. This Pan troglodytes (Chimpanzee) protein is Aspartate aminotransferase, cytoplasmic.